The sequence spans 271 residues: Regulatory protein RecX (271 aa).

This sequence belongs to the RecX family.

The protein resides in the cytoplasm. Modulates RecA activity. The protein is Regulatory protein RecX of Lactobacillus delbrueckii subsp. bulgaricus (strain ATCC 11842 / DSM 20081 / BCRC 10696 / JCM 1002 / NBRC 13953 / NCIMB 11778 / NCTC 12712 / WDCM 00102 / Lb 14).